Reading from the N-terminus, the 155-residue chain is Molybdopterin synthase catalytic subunit (155 aa).

Substrate is bound by residues 109–110, K125, and 132–134; these read HR and KKE.

This sequence belongs to the MoaE family. MOCS2B subfamily. As to quaternary structure, heterotetramer; composed of 2 small (MOCS2A) and 2 large (MOCS2B) subunits.

The protein resides in the cytoplasm. It is found in the cytosol. It catalyses the reaction 2 [molybdopterin-synthase sulfur-carrier protein]-C-terminal-Gly-aminoethanethioate + cyclic pyranopterin phosphate + H2O = molybdopterin + 2 [molybdopterin-synthase sulfur-carrier protein]-C-terminal Gly-Gly + 2 H(+). It participates in cofactor biosynthesis; molybdopterin biosynthesis. Functionally, catalytic subunit of the molybdopterin synthase complex, a complex that catalyzes the conversion of precursor Z into molybdopterin. Acts by mediating the incorporation of 2 sulfur atoms from thiocarboxylated MOCS2A into precursor Z to generate a dithiolene group. This chain is Molybdopterin synthase catalytic subunit, found in Taeniopygia guttata (Zebra finch).